The following is a 187-amino-acid chain: MPNQEKMEKAIYQFLEALGENPNREGLKDTPKRVAKMYIEMFSGLNQDPKEQFTAVFSENHEEVVIVKDIPFYSMCEHHLVPFYGKAHIAYLPNDGRVTGLSKLARAVEVASKRPQLQERLTAQVAQALEDALAPKGIFVMIEAEHMCMTMRGIKKPGSKTITTVARGLYKDDRYERQEILSLIQKG.

Zn(2+) contacts are provided by Cys-76, His-79, and Cys-148.

Belongs to the GTP cyclohydrolase I family. In terms of assembly, toroid-shaped homodecamer, composed of two pentamers of five dimers.

The catalysed reaction is GTP + H2O = 7,8-dihydroneopterin 3'-triphosphate + formate + H(+). It participates in cofactor biosynthesis; 7,8-dihydroneopterin triphosphate biosynthesis; 7,8-dihydroneopterin triphosphate from GTP: step 1/1. The polypeptide is GTP cyclohydrolase 1 (Streptococcus agalactiae serotype V (strain ATCC BAA-611 / 2603 V/R)).